The following is a 310-amino-acid chain: HTH-type transcriptional regulator PunR (310 aa).

The 58-residue stretch at 2–59 (WSEYSLEVVDAVARNGSFSAAAQELHRVPSAVSYTVRQLEEWLAVPLFERRHRDVELT) folds into the HTH lysR-type domain. The H-T-H motif DNA-binding region spans 19–38 (FSAAAQELHRVPSAVSYTVR).

It belongs to the LysR transcriptional regulatory family.

The protein resides in the cytoplasm. Its function is as follows. Transcriptional regulator that activates the expression of punC, which encodes a purine nucleoside transporter. The polypeptide is HTH-type transcriptional regulator PunR (Escherichia coli O157:H7).